The sequence spans 879 residues: Alanine--tRNA ligase (879 aa).

Zn(2+) is bound by residues H570, H574, C672, and H676.

This sequence belongs to the class-II aminoacyl-tRNA synthetase family. It depends on Zn(2+) as a cofactor.

The protein localises to the cytoplasm. The enzyme catalyses tRNA(Ala) + L-alanine + ATP = L-alanyl-tRNA(Ala) + AMP + diphosphate. In terms of biological role, catalyzes the attachment of alanine to tRNA(Ala) in a two-step reaction: alanine is first activated by ATP to form Ala-AMP and then transferred to the acceptor end of tRNA(Ala). Also edits incorrectly charged Ser-tRNA(Ala) and Gly-tRNA(Ala) via its editing domain. This chain is Alanine--tRNA ligase, found in Nitratidesulfovibrio vulgaris (strain ATCC 29579 / DSM 644 / CCUG 34227 / NCIMB 8303 / VKM B-1760 / Hildenborough) (Desulfovibrio vulgaris).